The sequence spans 44 residues: U2-agatoxin-Ao1s (44 aa).

A propeptide spanning residues 1–9 (KKVYSFLKL) is cleaved from the precursor. 3 cysteine pairs are disulfide-bonded: Cys-12-Cys-28, Cys-19-Cys-33, and Cys-27-Cys-43.

Belongs to the neurotoxin 01 (U2-agtx) family. Expressed by the venom gland.

The protein resides in the secreted. Its function is as follows. Insect active toxin causing rapid but reversible paralysis in crickets. No activity shown in mammals. Does not show effect on mammalian voltage-gated calcium channels. The chain is U2-agatoxin-Ao1s from Agelena orientalis (Funnel-web spider).